The sequence spans 285 residues: Eukaryotic translation initiation factor 3 subunit F-2 (285 aa).

Residues 11–145 form the MPN domain; that stretch reads VFLKPLVLFQ…TRLYCAVEMG (135 aa).

Belongs to the eIF-3 subunit F family. As to quaternary structure, component of the eukaryotic translation initiation factor 3 (eIF-3) complex. The eIF-3 complex interacts with pix.

It localises to the cytoplasm. Functionally, component of the eukaryotic translation initiation factor 3 (eIF-3) complex, which is involved in protein synthesis of a specialized repertoire of mRNAs and, together with other initiation factors, stimulates binding of mRNA and methionyl-tRNAi to the 40S ribosome. The eIF-3 complex specifically targets and initiates translation of a subset of mRNAs involved in cell proliferation. The chain is Eukaryotic translation initiation factor 3 subunit F-2 from Drosophila sechellia (Fruit fly).